A 690-amino-acid polypeptide reads, in one-letter code: Adhesion G protein-coupled receptor L4 (690 aa).

The first 19 residues, 1 to 19 (MKRLPLLVVFSTLLNCSYT), serve as a signal peptide directing secretion. The EGF-like 1 domain occupies 20 to 57 (QNCTKTPCLPNAKCEIRNGIEACYCNMGFSGNGVTICE). The Extracellular segment spans residues 20–432 (QNCTKTPCLP…DYNILTRITQ (413 aa)). Asn-21 carries an N-linked (GlcNAc...) asparagine glycan. 6 disulfide bridges follow: Cys-22–Cys-33, Cys-27–Cys-42, Cys-44–Cys-56, Cys-62–Cys-75, Cys-69–Cys-84, and Cys-86–Cys-107. The EGF-like 2; calcium-binding domain occupies 58 to 108 (DDNECGNLTQSCGENANCTNTEGSYYCMCVPGFRSSSNQDRFITNDGTVCI). Residues Asn-64 and Asn-74 are each glycosylated (N-linked (GlcNAc...) asparagine). Asn-127, Asn-177, Asn-188, Asn-249, Asn-381, and Asn-395 each carry an N-linked (GlcNAc...) asparagine glycan. A GAIN-B domain is found at 244–419 (TEFDTNSTDI…AILMSSGPSI (176 aa)). Cystine bridges form between Cys-370–Cys-401 and Cys-389–Cys-403. Residues 370 to 419 (CAFWNYSPDTMNGSWSSEGCELTYSNETHTSCRCNHLTHFAILMSSGPSI) are GPS. A helical transmembrane segment spans residues 433–453 (LGIIISLICLAICIFTFWFFS). The Cytoplasmic segment spans residues 454 to 460 (EIQSTRT). The chain crosses the membrane as a helical span at residues 461 to 481 (TIHKNLCCSLFLAELVFLVGI). Residues 482–499 (NTNTNKLFCSIIAGLLHY) are Extracellular-facing. The helical transmembrane segment at 500-520 (FFLAAFAWMCIEGIHLYLIVV) threads the bilayer. The Cytoplasmic segment spans residues 521–532 (GVIYNKGFLHKN). The helical transmembrane segment at 533-553 (FYIFGYLSPAVVVGFSAALGY) threads the bilayer. Topologically, residues 554–573 (RYYGTTKVCWLSTENNFIWS) are extracellular. Residues 574-594 (FIGPACLIILVNLLAFGVIIY) form a helical membrane-spanning segment. Over 595-618 (KVFRHTAGLKPEVSCFENIRSCAR) the chain is Cytoplasmic. Residues 619–639 (GALALLFLLGTTWIFGVLHVV) traverse the membrane as a helical segment. Topologically, residues 640–646 (HASVVTA) are extracellular. Residues 647 to 667 (YLFTVSNAFQGMFIFLFLCVL) traverse the membrane as a helical segment. At 668–690 (SRKIQEEYYRLFKNVPCCFGCLR) the chain is on the cytoplasmic side.

Belongs to the G-protein coupled receptor 2 family. Adhesion G-protein coupled receptor (ADGR) subfamily. Heterodimer of 2 chains generated by proteolytic processing; the large extracellular N-terminal fragment and the membrane-bound C-terminal fragment predominantly remain associated and non-covalently linked. Post-translationally, glycosylated. In terms of processing, proteolytically cleaved into 2 subunits, an extracellular alpha subunit and a seven-transmembrane subunit. As to expression, detected in the majority of epithelial cells in tumor and normal tissues. Expressed also in human umbilical vein endothelial cells.

The protein resides in the cell membrane. In terms of biological role, endothelial orphan receptor that acts as a key regulator of angiogenesis. The protein is Adhesion G protein-coupled receptor L4 of Homo sapiens (Human).